The primary structure comprises 176 residues: NADH-quinone oxidoreductase subunit I (176 aa).

2 consecutive 4Fe-4S ferredoxin-type domains span residues 47–77 and 87–116; these read LTRD…MQAA and AWFR…MTSE. Positions 57, 60, 63, 67, 96, 99, 102, and 106 each coordinate [4Fe-4S] cluster.

The protein belongs to the complex I 23 kDa subunit family. As to quaternary structure, NDH-1 is composed of 14 different subunits. Subunits NuoA, H, J, K, L, M, N constitute the membrane sector of the complex. [4Fe-4S] cluster is required as a cofactor.

It is found in the cell inner membrane. It catalyses the reaction a quinone + NADH + 5 H(+)(in) = a quinol + NAD(+) + 4 H(+)(out). NDH-1 shuttles electrons from NADH, via FMN and iron-sulfur (Fe-S) centers, to quinones in the respiratory chain. The immediate electron acceptor for the enzyme in this species is believed to be ubiquinone. Couples the redox reaction to proton translocation (for every two electrons transferred, four hydrogen ions are translocated across the cytoplasmic membrane), and thus conserves the redox energy in a proton gradient. The polypeptide is NADH-quinone oxidoreductase subunit I (Syntrophotalea carbinolica (strain DSM 2380 / NBRC 103641 / GraBd1) (Pelobacter carbinolicus)).